The following is a 94-amino-acid chain: Integration host factor subunit beta (94 aa).

Belongs to the bacterial histone-like protein family. In terms of assembly, heterodimer of an alpha and a beta chain.

Its function is as follows. This protein is one of the two subunits of integration host factor, a specific DNA-binding protein that functions in genetic recombination as well as in transcriptional and translational control. This is Integration host factor subunit beta from Azorhizobium caulinodans (strain ATCC 43989 / DSM 5975 / JCM 20966 / LMG 6465 / NBRC 14845 / NCIMB 13405 / ORS 571).